Consider the following 131-residue polypeptide: MRHYEIVFMVHPDQSEQVPGMIERYTGAITEANGKIHRLEDWGRRQLAYPIQDLHKAHYVLMNVEAPAETIEELETAFRFNDAVLRNMVMRTKGAITEASPMAKAKDERDSRRGPAGDRSYDEANAEEIAE.

Positions 96–131 are disordered; sequence ITEASPMAKAKDERDSRRGPAGDRSYDEANAEEIAE. The segment covering 104 to 122 has biased composition (basic and acidic residues); that stretch reads KAKDERDSRRGPAGDRSYD.

This sequence belongs to the bacterial ribosomal protein bS6 family.

In terms of biological role, binds together with bS18 to 16S ribosomal RNA. The polypeptide is Small ribosomal subunit protein bS6 (Shewanella oneidensis (strain ATCC 700550 / JCM 31522 / CIP 106686 / LMG 19005 / NCIMB 14063 / MR-1)).